The chain runs to 209 residues: Uracil phosphoribosyltransferase (209 aa).

Residues arginine 79, arginine 104, and 131–139 each bind 5-phospho-alpha-D-ribose 1-diphosphate; that span reads DPMLATGGS. Uracil is bound by residues valine 194 and 199-201; that span reads GDA. Aspartate 200 lines the 5-phospho-alpha-D-ribose 1-diphosphate pocket.

It belongs to the UPRTase family. The cofactor is Mg(2+).

The catalysed reaction is UMP + diphosphate = 5-phospho-alpha-D-ribose 1-diphosphate + uracil. The protein operates within pyrimidine metabolism; UMP biosynthesis via salvage pathway; UMP from uracil: step 1/1. With respect to regulation, allosterically activated by GTP. In terms of biological role, catalyzes the conversion of uracil and 5-phospho-alpha-D-ribose 1-diphosphate (PRPP) to UMP and diphosphate. The polypeptide is Uracil phosphoribosyltransferase (Clostridium botulinum (strain ATCC 19397 / Type A)).